The sequence spans 96 residues: Co-chaperonin GroES (96 aa).

The protein belongs to the GroES chaperonin family. In terms of assembly, heptamer of 7 subunits arranged in a ring. Interacts with the chaperonin GroEL.

Its subcellular location is the cytoplasm. In terms of biological role, together with the chaperonin GroEL, plays an essential role in assisting protein folding. The GroEL-GroES system forms a nano-cage that allows encapsulation of the non-native substrate proteins and provides a physical environment optimized to promote and accelerate protein folding. GroES binds to the apical surface of the GroEL ring, thereby capping the opening of the GroEL channel. The sequence is that of Co-chaperonin GroES from Histophilus somni (strain 129Pt) (Haemophilus somnus).